Consider the following 258-residue polypeptide: Protein SAWADEE HOMEODOMAIN HOMOLOG 1 (258 aa).

The SAWADEE domain stretch occupies residues Ala-138–Glu-244. The Zn(2+) site is built by Cys-191, His-225, Cys-230, and Cys-232.

In terms of assembly, associates with the RNA polymerase IV (Pol IV) complex. Interacts with NRPD1, NRPD2, NRPD3, NRPD3B, CLSY1 and CLSY2.

It localises to the nucleus. Its function is as follows. Involved in RNA-directed DNA methylation (RdDM). Required for the silencing of some endogenous RdDM targets and accumulation of 24-nt siRNAs, but not for the production of Pol V-dependent transcripts. Functions in transcriptional silencing through both DNA methylation-dependent and -independent pathways. Required for both maintenance and de-novo DNA methylation. Plays a role in the recruitment of Pol IV to genomic regions associated with K9 methylated histone H3 that are targets for RdDM. This Arabidopsis thaliana (Mouse-ear cress) protein is Protein SAWADEE HOMEODOMAIN HOMOLOG 1 (SHH1).